A 423-amino-acid polypeptide reads, in one-letter code: Phytoene synthase, chloroplastic (423 aa).

The N-terminal 136 residues, 1 to 136 (MVVAILRVVS…DAYDRCGEVC (136 aa)), are a transit peptide targeting the chloroplast.

It belongs to the phytoene/squalene synthase family. In terms of assembly, monomer.

It is found in the plastid. The protein resides in the chloroplast. The catalysed reaction is 2 (2E,6E,10E)-geranylgeranyl diphosphate = 15-cis-phytoene + 2 diphosphate. It functions in the pathway carotenoid biosynthesis; phytoene biosynthesis; all-trans-phytoene from geranylgeranyl diphosphate: step 1/1. In terms of biological role, catalyzes the reaction from prephytoene diphosphate to phytoene. In Narcissus pseudonarcissus (Daffodil), this protein is Phytoene synthase, chloroplastic (PSY).